We begin with the raw amino-acid sequence, 390 residues long: S-adenosylmethionine synthase 2 (390 aa).

Glutamate 9 contributes to the Mg(2+) binding site. ATP is bound at residue histidine 15. Residue glutamate 43 coordinates K(+). The L-methionine site is built by glutamate 56 and glutamine 99. ATP-binding positions include aspartate 167–lysine 169, serine 235–phenylalanine 238, aspartate 246, arginine 252–lysine 253, alanine 269, lysine 273, and lysine 277. Residue aspartate 246 participates in L-methionine binding. L-methionine is bound at residue lysine 277.

Belongs to the AdoMet synthase family. Homotetramer. Mn(2+) is required as a cofactor. The cofactor is Mg(2+). It depends on Co(2+) as a cofactor. Requires K(+) as cofactor.

It localises to the cytoplasm. It carries out the reaction L-methionine + ATP + H2O = S-adenosyl-L-methionine + phosphate + diphosphate. It functions in the pathway amino-acid biosynthesis; S-adenosyl-L-methionine biosynthesis; S-adenosyl-L-methionine from L-methionine: step 1/1. Catalyzes the formation of S-adenosylmethionine from methionine and ATP. The reaction comprises two steps that are both catalyzed by the same enzyme: formation of S-adenosylmethionine (AdoMet) and triphosphate, and subsequent hydrolysis of the triphosphate. This chain is S-adenosylmethionine synthase 2 (SAM2), found in Petunia hybrida (Petunia).